A 121-amino-acid polypeptide reads, in one-letter code: Protein MGF 110-5L (121 aa).

The N-terminal stretch at 1-18 (MLVIFLGILGLLANQVSS) is a signal peptide. 2 N-linked (GlcNAc...) asparagine; by host glycosylation sites follow: Asn62 and Asn116.

This sequence belongs to the asfivirus MGF 110 family.

Its function is as follows. Plays a role in virus cell tropism, and may be required for efficient virus replication in macrophages. This African swine fever virus (isolate Tick/South Africa/Pretoriuskop Pr4/1996) (ASFV) protein is Protein MGF 110-5L.